The sequence spans 859 residues: Villin-like protein (859 aa).

Gelsolin-like repeat units follow at residues 24-76, 148-188, 264-308, 401-450, 521-561, and 624-665; these read LKML…EARE, VSAT…SEKA, LVVQ…QEKK, LQRQ…EDTK, TRTM…DQRE, and LVLT…WKKE. An HP domain is found at 793 to 859; it reads SMVNGSLPRE…QQAKKKLGFF (67 aa).

This sequence belongs to the villin/gelsolin family.

Possible tumor suppressor. The sequence is that of Villin-like protein from Mus musculus (Mouse).